The following is a 241-amino-acid chain: Demethylmenaquinone methyltransferase (241 aa).

S-adenosyl-L-methionine is bound by residues T60, D81, and 106–107 (DA).

This sequence belongs to the class I-like SAM-binding methyltransferase superfamily. MenG/UbiE family.

It catalyses the reaction a 2-demethylmenaquinol + S-adenosyl-L-methionine = a menaquinol + S-adenosyl-L-homocysteine + H(+). Its pathway is quinol/quinone metabolism; menaquinone biosynthesis; menaquinol from 1,4-dihydroxy-2-naphthoate: step 2/2. In terms of biological role, methyltransferase required for the conversion of demethylmenaquinol (DMKH2) to menaquinol (MKH2). The sequence is that of Demethylmenaquinone methyltransferase from Staphylococcus aureus (strain Mu3 / ATCC 700698).